We begin with the raw amino-acid sequence, 365 residues long: Peptide chain release factor 2 (365 aa).

Gln-251 carries the N5-methylglutamine modification.

Belongs to the prokaryotic/mitochondrial release factor family. Methylated by PrmC. Methylation increases the termination efficiency of RF2.

The protein localises to the cytoplasm. Peptide chain release factor 2 directs the termination of translation in response to the peptide chain termination codons UGA and UAA. The chain is Peptide chain release factor 2 from Sulfurimonas denitrificans (strain ATCC 33889 / DSM 1251) (Thiomicrospira denitrificans (strain ATCC 33889 / DSM 1251)).